The following is a 604-amino-acid chain: Beta-(1--&gt;2)glucan export ATP-binding/permease protein NdvA (604 aa).

In terms of domain architecture, ABC transmembrane type-1 spans 21 to 311 (GWILAFANLL…VVSFINSVFM (291 aa)). A run of 6 helical transmembrane segments spans residues 22–42 (WILA…PVLF), 68–88 (LLGA…AVAL), 146–166 (EHFA…YINW), 168–188 (LAIL…LVVH), 238–258 (LLAL…ITRA), and 285–305 (IVMF…VVSF). An ABC transporter domain is found at 345 to 579 (VEFKDVSFSY…QGHFAALARA (235 aa)). 378–385 (GATGAGKS) lines the ATP pocket.

Belongs to the ABC transporter superfamily. Beta-(1--&gt;2)glucan exporter (TC 3.A.1.108.1) family. As to quaternary structure, homodimer.

It localises to the cell inner membrane. The catalysed reaction is [(1-&gt;2)-beta-D-glucosyl](n)(in) + ATP + H2O = [(1-&gt;2)-beta-D-glucosyl](n)(out) + ADP + phosphate + H(+). In terms of biological role, involved in beta-(1--&gt;2)glucan export. Transmembrane domains (TMD) form a pore in the inner membrane and the ATP-binding domain (NBD) is responsible for energy generation. The polypeptide is Beta-(1--&gt;2)glucan export ATP-binding/permease protein NdvA (Rhodopseudomonas palustris (strain BisB18)).